The sequence spans 378 residues: Pyrimidine monooxygenase RutA (378 aa).

FMN-binding positions include 65 to 66 (IK), Asn-131, Glu-140, 156 to 157 (RY), and Ser-206.

It belongs to the NtaA/SnaA/DszA monooxygenase family. RutA subfamily.

It catalyses the reaction uracil + FMNH2 + NADH + O2 = (Z)-3-ureidoacrylate + FMN + NAD(+) + H2O + H(+). The catalysed reaction is thymine + FMNH2 + NADH + O2 = (Z)-2-methylureidoacrylate + FMN + NAD(+) + H2O + H(+). In terms of biological role, catalyzes the pyrimidine ring opening between N-3 and C-4 by an unusual flavin hydroperoxide-catalyzed mechanism, adding oxygen atoms in the process to yield ureidoacrylate peracid, that immediately reacts with FMN forming ureidoacrylate and FMN-N(5)-oxide. The FMN-N(5)-oxide reacts spontaneously with NADH to produce FMN. Requires the flavin reductase RutF to regenerate FMN in vivo. The chain is Pyrimidine monooxygenase RutA from Cronobacter turicensis (strain DSM 18703 / CCUG 55852 / LMG 23827 / z3032).